A 407-amino-acid polypeptide reads, in one-letter code: MTIESTNSFVVPSDTELIDVTPLGSTKLFQPIKVGNNVLPQRIAYVPTTRFRASKDHIPSDLQLNYYNARSQYPGTLIITEATFASERGGIDLHVPGIYNDAQAKSWKKINEAIHGNGSFSSVQLWYLGRVANAKDLKDSGLPLIAPSAVYWDENSEKLAKEAGNELRALTEEEIDHIVEVEYPNAAKHALEAGFDYVEIHGAHGYLLDQFLNLASNKRTDKYGCGSIENRARLLLRVVDKLIEVVGANRLALRLSPWASFQGMEIEGEEIHSYILQQLQQRADNGQQLAYISLVEPRVTGIYDVSLKDQQGRSNEFAYKIWKGNFIRAGNYTYDAPEFKTLINDLKNDRTIIGFSRFFTSNPDLVEKLKLGKPLNYYNREEFYKYYNYGYNSYDESEKQVIGKPLA.

The FMN site is built by threonine 49 and glutamine 124. Catalysis depends on tyrosine 206, which acts as the Proton donor. Residues arginine 254 and arginine 357 each coordinate FMN.

Belongs to the NADH:flavin oxidoreductase/NADH oxidase family. The cofactor is FMN.

It carries out the reaction A + NADPH + H(+) = AH2 + NADP(+). Oxidoreductase that binds mammalian estrogens with high affinity. This Candida albicans (strain SC5314 / ATCC MYA-2876) (Yeast) protein is Probable NADPH dehydrogenase.